Here is a 381-residue protein sequence, read N- to C-terminus: Major structural protein ORF14 (381 aa).

Residues 287-307 (RQFKEKLNQEKDEKKRSINKE) are a coiled coil.

This Helicobacter pylori (strain 35A) protein is Major structural protein ORF14.